We begin with the raw amino-acid sequence, 491 residues long: ATP-dependent protease ATPase subunit HslU (491 aa).

ATP is bound by residues Ile34, 76-81 (GVGKTE), Asp296, Glu364, and Arg436.

This sequence belongs to the ClpX chaperone family. HslU subfamily. As to quaternary structure, a double ring-shaped homohexamer of HslV is capped on each side by a ring-shaped HslU homohexamer. The assembly of the HslU/HslV complex is dependent on binding of ATP.

The protein localises to the cytoplasm. ATPase subunit of a proteasome-like degradation complex; this subunit has chaperone activity. The binding of ATP and its subsequent hydrolysis by HslU are essential for unfolding of protein substrates subsequently hydrolyzed by HslV. HslU recognizes the N-terminal part of its protein substrates and unfolds these before they are guided to HslV for hydrolysis. In Chlorobaculum tepidum (strain ATCC 49652 / DSM 12025 / NBRC 103806 / TLS) (Chlorobium tepidum), this protein is ATP-dependent protease ATPase subunit HslU.